We begin with the raw amino-acid sequence, 538 residues long: Atos homolog protein B (538 aa).

Disordered regions lie at residues 1–99 (MRHV…PSTV), 165–185 (QGGQ…QLHT), and 199–270 (KSPV…GTLG). The span at 227–238 (HTPPGPGPPGPC) shows a compositional bias: pro residues. Ser254 and Ser255 each carry phosphoserine. Positions 348-430 (LLGNFEESLL…VPKVGTIQVT (83 aa)) are required for macropage invasion. A transactivation domain 1 (TAD1) region spans residues 436–444 (QTVVKMFLV).

The protein belongs to the ATOS family.

The protein localises to the nucleus. Functionally, transcription regulator that syncronizes transcriptional and translational programs to promote macrophage invasion of tissues. This Mus musculus (Mouse) protein is Atos homolog protein B.